The chain runs to 346 residues: Cyclin-dependent kinase 20 (346 aa).

One can recognise a Protein kinase domain in the interval 4 to 288 (YCILGRIGEG…ASKALLHQYF (285 aa)). Residues 10-18 (IGEGAHGIV) and lysine 33 each bind ATP. The active-site Proton acceptor is aspartate 127.

This sequence belongs to the protein kinase superfamily. CMGC Ser/Thr protein kinase family. CDC2/CDKX subfamily. As to quaternary structure, monomer. Interacts with TBC1D32 and MAK.

It localises to the nucleus. The protein localises to the cytoplasm. Its subcellular location is the cell projection. The protein resides in the cilium. It catalyses the reaction L-seryl-[protein] + ATP = O-phospho-L-seryl-[protein] + ADP + H(+). The catalysed reaction is L-threonyl-[protein] + ATP = O-phospho-L-threonyl-[protein] + ADP + H(+). Required for high-level Shh responses in the developing neural tube. Together with TBC1D32, controls the structure of the primary cilium by coordinating assembly of the ciliary membrane and axoneme, allowing GLI2 to be properly activated in response to SHH signaling. Involved in cell growth. Activates CDK2, a kinase involved in the control of the cell cycle, by phosphorylating residue 'Thr-160'. This Pongo abelii (Sumatran orangutan) protein is Cyclin-dependent kinase 20 (CDK20).